We begin with the raw amino-acid sequence, 164 residues long: SsrA-binding protein (164 aa).

This sequence belongs to the SmpB family.

Its subcellular location is the cytoplasm. Functionally, required for rescue of stalled ribosomes mediated by trans-translation. Binds to transfer-messenger RNA (tmRNA), required for stable association of tmRNA with ribosomes. tmRNA and SmpB together mimic tRNA shape, replacing the anticodon stem-loop with SmpB. tmRNA is encoded by the ssrA gene; the 2 termini fold to resemble tRNA(Ala) and it encodes a 'tag peptide', a short internal open reading frame. During trans-translation Ala-aminoacylated tmRNA acts like a tRNA, entering the A-site of stalled ribosomes, displacing the stalled mRNA. The ribosome then switches to translate the ORF on the tmRNA; the nascent peptide is terminated with the 'tag peptide' encoded by the tmRNA and targeted for degradation. The ribosome is freed to recommence translation, which seems to be the essential function of trans-translation. The sequence is that of SsrA-binding protein from Synechococcus sp. (strain CC9311).